We begin with the raw amino-acid sequence, 210 residues long: MNKALVTLLLTLGITGLAHAAGDAAAGQGKAAVCGACHGPDGNSAAPNFPKLAGQGERYLLKQMQDIKAGTKPGAPEGSGRKVLEMTGMLDNFSDQDLADLAAYFTSQKPTVGAADPQLVEAGETLYRGGKLADGMPACTGCHSPNGEGNTPAAYPRLSGQHAQYVAKQLTDFREGARTNDGDNMIMRSIAAKLSNKDIAAISSYIQGLH.

An N-terminal signal peptide occupies residues 1–20 (MNKALVTLLLTLGITGLAHA). Residues C34, C37, H38, M86, C139, C142, H143, and M187 each coordinate heme c.

In terms of processing, binds 2 heme c groups covalently per subunit.

It is found in the periplasm. Functionally, diheme, high potential cytochrome c believed to be an intermediate electron donor to terminal oxidation systems. This chain is Cytochrome c4 (cycA), found in Azotobacter vinelandii.